Reading from the N-terminus, the 248-residue chain is tRNA (guanine-N(1)-)-methyltransferase (248 aa).

S-adenosyl-L-methionine-binding positions include Gly-113 and 133–138; that span reads IGDYVL. Residues 227 to 248 are disordered; the sequence is RPAQTIRAKGESQKTPKNKTDG. Basic and acidic residues predominate over residues 234 to 248; it reads AKGESQKTPKNKTDG.

Belongs to the RNA methyltransferase TrmD family. In terms of assembly, homodimer.

The protein localises to the cytoplasm. It carries out the reaction guanosine(37) in tRNA + S-adenosyl-L-methionine = N(1)-methylguanosine(37) in tRNA + S-adenosyl-L-homocysteine + H(+). In terms of biological role, specifically methylates guanosine-37 in various tRNAs. The sequence is that of tRNA (guanine-N(1)-)-methyltransferase from Rhodopseudomonas palustris (strain TIE-1).